Consider the following 408-residue polypeptide: LL-diaminopimelate aminotransferase (408 aa).

Residues tyrosine 15 and glycine 42 each coordinate substrate. Residues tyrosine 72, 108–109 (SK), tyrosine 132, asparagine 187, tyrosine 218, and 246–248 (SFS) contribute to the pyridoxal 5'-phosphate site. Residues lysine 109, tyrosine 132, and asparagine 187 each coordinate substrate. At lysine 249 the chain carries N6-(pyridoxal phosphate)lysine. Positions 257 and 292 each coordinate pyridoxal 5'-phosphate. The substrate site is built by asparagine 292 and arginine 388.

Belongs to the class-I pyridoxal-phosphate-dependent aminotransferase family. LL-diaminopimelate aminotransferase subfamily. Homodimer. It depends on pyridoxal 5'-phosphate as a cofactor.

It carries out the reaction (2S,6S)-2,6-diaminopimelate + 2-oxoglutarate = (S)-2,3,4,5-tetrahydrodipicolinate + L-glutamate + H2O + H(+). It functions in the pathway amino-acid biosynthesis; L-lysine biosynthesis via DAP pathway; LL-2,6-diaminopimelate from (S)-tetrahydrodipicolinate (aminotransferase route): step 1/1. In terms of biological role, involved in the synthesis of meso-diaminopimelate (m-DAP or DL-DAP), required for both lysine and peptidoglycan biosynthesis. Catalyzes the direct conversion of tetrahydrodipicolinate to LL-diaminopimelate. The polypeptide is LL-diaminopimelate aminotransferase (Synechococcus sp. (strain CC9902)).